The sequence spans 343 residues: Dihydroorotase (343 aa).

The Zn(2+) site is built by His13 and His15. Residues 15-17 (HLR) and Asn41 each bind substrate. Lys99, His136, and His174 together coordinate Zn(2+). Residue Lys99 is modified to N6-carboxylysine. His136 lines the substrate pocket. Residue Leu219 coordinates substrate. Asp247 contacts Zn(2+). Residue Asp247 is part of the active site. Substrate contacts are provided by His251 and Ala263.

This sequence belongs to the metallo-dependent hydrolases superfamily. DHOase family. Class II DHOase subfamily. In terms of assembly, homodimer. Zn(2+) is required as a cofactor.

It carries out the reaction (S)-dihydroorotate + H2O = N-carbamoyl-L-aspartate + H(+). The protein operates within pyrimidine metabolism; UMP biosynthesis via de novo pathway; (S)-dihydroorotate from bicarbonate: step 3/3. Functionally, catalyzes the reversible cyclization of carbamoyl aspartate to dihydroorotate. The sequence is that of Dihydroorotase from Shewanella oneidensis (strain ATCC 700550 / JCM 31522 / CIP 106686 / LMG 19005 / NCIMB 14063 / MR-1).